Reading from the N-terminus, the 40-residue chain is Photosystem II reaction center protein J (40 aa).

The helical transmembrane segment at 10–30 (LWIIGTVTGILVIGLIGIFFF) threads the bilayer.

The protein belongs to the PsbJ family. In terms of assembly, PSII is composed of 1 copy each of membrane proteins PsbA, PsbB, PsbC, PsbD, PsbE, PsbF, PsbH, PsbI, PsbJ, PsbK, PsbL, PsbM, PsbT, PsbX, PsbY, PsbZ, Psb30/Ycf12, at least 3 peripheral proteins of the oxygen-evolving complex and a large number of cofactors. It forms dimeric complexes.

It localises to the plastid membrane. One of the components of the core complex of photosystem II (PSII). PSII is a light-driven water:plastoquinone oxidoreductase that uses light energy to abstract electrons from H(2)O, generating O(2) and a proton gradient subsequently used for ATP formation. It consists of a core antenna complex that captures photons, and an electron transfer chain that converts photonic excitation into a charge separation. This Cuscuta exaltata (Tall dodder) protein is Photosystem II reaction center protein J.